We begin with the raw amino-acid sequence, 331 residues long: Protein MGF 300-4L (331 aa).

The protein belongs to the asfivirus MGF 300 family.

The polypeptide is Protein MGF 300-4L (African swine fever virus (isolate Tick/Malawi/Lil 20-1/1983) (ASFV)).